Consider the following 436-residue polypeptide: Phosphate-repressible acid phosphatase (436 aa).

The N-terminal stretch at 1–20 (MKGTAASALLIALSATAAQA) is a signal peptide. Residues N227, N283, and N304 are each glycosylated (N-linked (GlcNAc...) asparagine).

As to quaternary structure, monomer.

The enzyme catalyses a phosphate monoester + H2O = an alcohol + phosphate. This chain is Phosphate-repressible acid phosphatase (pacA), found in Aspergillus niger.